An 82-amino-acid polypeptide reads, in one-letter code: Apovitellenin-1 (82 aa).

The protein belongs to the apovitellenin family. In terms of assembly, monomer. As to expression, found in egg yolk and in plasma.

Functionally, protein component of the very low density lipoprotein (VLDL) of egg-laying females. Potent lipoprotein lipase inhibitor, preventing the loss of triglycerides from VLDL on their way from the liver to the growing oocytes. This Meleagris gallopavo (Wild turkey) protein is Apovitellenin-1.